The chain runs to 147 residues: Cyanate hydratase (147 aa).

Catalysis depends on residues R88, E91, and S114.

This sequence belongs to the cyanase family.

The enzyme catalyses cyanate + hydrogencarbonate + 3 H(+) = NH4(+) + 2 CO2. Functionally, catalyzes the reaction of cyanate with bicarbonate to produce ammonia and carbon dioxide. The protein is Cyanate hydratase of Methylobacillus flagellatus (strain ATCC 51484 / DSM 6875 / VKM B-1610 / KT).